Reading from the N-terminus, the 534-residue chain is Cytochrome P450 monooxygenase CYP4 (534 aa).

A helical transmembrane segment spans residues 46 to 66; the sequence is TIIFCVLMSLVGYIVSRIIWG. Residue Asn-220 is glycosylated (N-linked (GlcNAc...) asparagine). Cys-477 is a heme binding site. An N-linked (GlcNAc...) asparagine glycan is attached at Asn-515.

It belongs to the cytochrome P450 family. It depends on heme as a cofactor.

Its subcellular location is the membrane. It participates in secondary metabolite biosynthesis. Its function is as follows. Cytochrome P450 monooxygenase; part of the gene cluster that mediates the biosynthesis of a tyrosine-derived cytochalasan acting as a fungal signal recognized by resistant rice plants and leads to avirulence in Pi33 resistant rice cultivars. The first step in the pathway is catalyzed by the hybrid PKS-NRPS ACE1, assisted by the enoyl reductase RAP1, that are responsible for fusion of the tyrosine precursor and the polyketide backbone. The polyketide synthase module (PKS) of ACE1 is responsible for the synthesis of the polyketide backbone and the downstream nonribosomal peptide synthetase (NRPS) amidates the carboxyl end of the polyketide with the tyrosine precursor. Because ACE1 lacks a designated enoylreductase (ER) domain, the required activity is provided the enoyl reductase RAP1. Reduction by the hydrolyase ORFZ, followed by dehydration and intra-molecular Diels-Alder cyclization by the Diels-Alderase ORF3 then yield the required isoindolone-fused macrocycle. A number of oxidative steps catalyzed by the tailoring enzymes identified within the cluster, including cytochrome P450 monooxygenases CYP1 to CYP4, the FAD-linked oxidoreductase OXR2 and the short-chain dehydrogenase/reductase OXR1, are further required to afford the final cytochalasans that confer avirulence and which have still to be identified. The monooxygenase CYP1 has been shown to be a site-selective C-18 hydroxylase whereas the function of CYP3 is the site-selective epoxidation of the C-6/C-7 olefin that is present in some intermediate compounds. Finally, SYN2 and RAP2 are not required for avirulence in Pi33 resistant rice cultivars. The protein is Cytochrome P450 monooxygenase CYP4 of Pyricularia oryzae (strain 70-15 / ATCC MYA-4617 / FGSC 8958) (Rice blast fungus).